Here is a 486-residue protein sequence, read N- to C-terminus: N-succinylglutamate 5-semialdehyde dehydrogenase (486 aa).

220 to 225 (GSSRTG) is an NAD(+) binding site. Catalysis depends on residues Glu-243 and Cys-277.

It belongs to the aldehyde dehydrogenase family. AstD subfamily.

The enzyme catalyses N-succinyl-L-glutamate 5-semialdehyde + NAD(+) + H2O = N-succinyl-L-glutamate + NADH + 2 H(+). It participates in amino-acid degradation; L-arginine degradation via AST pathway; L-glutamate and succinate from L-arginine: step 4/5. Its function is as follows. Catalyzes the NAD-dependent reduction of succinylglutamate semialdehyde into succinylglutamate. In Shewanella putrefaciens (strain CN-32 / ATCC BAA-453), this protein is N-succinylglutamate 5-semialdehyde dehydrogenase.